We begin with the raw amino-acid sequence, 263 residues long: Peptide methionine sulfoxide reductase A4, chloroplastic (263 aa).

The transit peptide at 1 to 75 (MPPLLASTSS…GLGGLGGSPR (75 aa)) directs the protein to the chloroplast.

The protein belongs to the MsrA Met sulfoxide reductase family. In terms of tissue distribution, expressed in roots, stems, leaves and flowers.

The protein resides in the plastid. It localises to the chloroplast. It catalyses the reaction L-methionyl-[protein] + [thioredoxin]-disulfide + H2O = L-methionyl-(S)-S-oxide-[protein] + [thioredoxin]-dithiol. It carries out the reaction [thioredoxin]-disulfide + L-methionine + H2O = L-methionine (S)-S-oxide + [thioredoxin]-dithiol. In terms of biological role, catalyzes the reduction of methionine sulfoxide (MetSO) to methionine in proteins. Involved in abiotic and salt stress responses. Plays a protective role against oxidative stress by restoring activity to proteins that have been inactivated by methionine oxidation. MSRA family specifically reduces the MetSO S-enantiomer. The protein is Peptide methionine sulfoxide reductase A4, chloroplastic of Oryza sativa subsp. japonica (Rice).